We begin with the raw amino-acid sequence, 353 residues long: Quinolinate synthase (353 aa).

Iminosuccinate-binding residues include His47 and Ser68. Position 113 (Cys113) interacts with [4Fe-4S] cluster. Iminosuccinate contacts are provided by residues 139-141 (YAN) and Ser156. Position 200 (Cys200) interacts with [4Fe-4S] cluster. Iminosuccinate contacts are provided by residues 226 to 228 (HPE) and Thr243. Cys297 contacts [4Fe-4S] cluster.

Belongs to the quinolinate synthase family. Type 1 subfamily. Requires [4Fe-4S] cluster as cofactor.

It localises to the cytoplasm. The enzyme catalyses iminosuccinate + dihydroxyacetone phosphate = quinolinate + phosphate + 2 H2O + H(+). The protein operates within cofactor biosynthesis; NAD(+) biosynthesis; quinolinate from iminoaspartate: step 1/1. In terms of biological role, catalyzes the condensation of iminoaspartate with dihydroxyacetone phosphate to form quinolinate. This Vibrio cholerae serotype O1 (strain ATCC 39541 / Classical Ogawa 395 / O395) protein is Quinolinate synthase.